Here is a 258-residue protein sequence, read N- to C-terminus: Tryptophan synthase alpha chain (258 aa).

Residues E52 and D63 each act as proton acceptor in the active site.

The protein belongs to the TrpA family. As to quaternary structure, tetramer of two alpha and two beta chains.

The catalysed reaction is (1S,2R)-1-C-(indol-3-yl)glycerol 3-phosphate + L-serine = D-glyceraldehyde 3-phosphate + L-tryptophan + H2O. The protein operates within amino-acid biosynthesis; L-tryptophan biosynthesis; L-tryptophan from chorismate: step 5/5. Functionally, the alpha subunit is responsible for the aldol cleavage of indoleglycerol phosphate to indole and glyceraldehyde 3-phosphate. The polypeptide is Tryptophan synthase alpha chain (Streptococcus pneumoniae (strain ATCC 700669 / Spain 23F-1)).